The following is a 606-amino-acid chain: Vitamin B12 transporter BtuB (606 aa).

Positions 1-21 (MKKTLLAVALAPLCLPSQVFA) are cleaved as a signal peptide. The short motif at 28 to 35 (DVMVVTAN) is the TonB box element. The TBDR plug domain occupies 40–152 (PIKNVIAPIS…IGGVLNIITA (113 aa)). The TBDR beta-barrel domain maps to 157 to 606 (ESVAEVTAGG…SYYATATYKF (450 aa)). Residues 589–606 (ETYNVQERSYYATATYKF) carry the TonB C-terminal box motif.

Belongs to the TonB-dependent receptor family. BtuB (TC 1.B.14.3.1) subfamily.

It localises to the cell outer membrane. Its function is as follows. Involved in the active translocation of vitamin B12 (cyanocobalamin) across the outer membrane to the periplasmic space. It derives its energy for transport by interacting with the trans-periplasmic membrane protein TonB. This Photobacterium profundum (strain SS9) protein is Vitamin B12 transporter BtuB.